A 522-amino-acid polypeptide reads, in one-letter code: Penicillin-sensitive carboxypeptidase A (522 aa).

Catalysis depends on S94, which acts as the Acyl-ester intermediate. The active-site Proton acceptor is the K97. Residue S351 is part of the active site. Residue K461 coordinates substrate.

It belongs to the peptidase S13 family.

The catalysed reaction is Preferential cleavage: (Ac)2-L-Lys-D-Ala-|-D-Ala. Also transpeptidation of peptidyl-alanyl moieties that are N-acyl substituents of D-alanine.. Its activity is regulated as follows. Inhibited by penicillin G. Its function is as follows. Carboxypeptidase. The chain is Penicillin-sensitive carboxypeptidase A (pscA) from Dictyostelium discoideum (Social amoeba).